A 969-amino-acid polypeptide reads, in one-letter code: Protein translocase subunit SecA (969 aa).

Residues glutamine 99, 117–121 (GEGKT), and aspartate 631 each bind ATP.

This sequence belongs to the SecA family. In terms of assembly, monomer and homodimer. Part of the essential Sec protein translocation apparatus which comprises SecA, SecYEG and auxiliary proteins SecDF. Other proteins may also be involved.

It is found in the cell inner membrane. It localises to the cytoplasm. It carries out the reaction ATP + H2O + cellular proteinSide 1 = ADP + phosphate + cellular proteinSide 2.. Functionally, part of the Sec protein translocase complex. Interacts with the SecYEG preprotein conducting channel. Has a central role in coupling the hydrolysis of ATP to the transfer of proteins into and across the cell membrane, serving as an ATP-driven molecular motor driving the stepwise translocation of polypeptide chains across the membrane. The protein is Protein translocase subunit SecA of Chlamydia abortus (strain DSM 27085 / S26/3) (Chlamydophila abortus).